The sequence spans 994 residues: MERSQSQRHGGEQSWWGSAPQYQYMPFEHCTSYGLPSENGGLQHRPRKDMGPRHNAHPTQIYGHQKEQYSYKAQDGGMPKKMGSSSTMDSLDEDHYSKCQDCVHRLGRVLRRKLGEDWIFLVLLGLLMALVSWCMDYVSAKSLQAYKWTYAQMKPSLPLQYLAWVTFPLILILFSALFCQLISPQAVGSGIPEMKTILRGVVLKEYLTLKAFVAKVVALTAGLGSGIPVGKEGPFVHIASICAAVLSKFMSMFSGVYEQPYYYTDILTVGCAVGVGCCFGTPLGGVLFSIEVTSTYFAVRNYWRGFFAATFSAFVFRVLAVWNKDAVTITALFRTNFRMDFPFDLKELPAFAVIGICCGFLGAVFVYLHRQVMLGVRKHKCLSQFLAKHRLLYPGIVTFVIASLTFPPGMGQFMAGELMPREAISTLFDNNTWVKHIGDPQSLGQSAVWLHPQVNVIIIILLFFVMKFWMSIVATTMPIPCGGFMPVFVLGAAFGRLVGEIMAMLFPEGILFDDIIYKILPGGYAVIGAAALTGAVSHTVSTAVICFELTGQIAHILPMMVAVILANMVAQSLQPSLYDSIIQVKKLPYLPDLGWNQLSKFTIFVEDIMVRDVKFVSASCTYGELRNLLQATTVKTLPLVDSKDSMILLGSVERSELQSLLQRHLCAERRLKAAQDMARKLSELPYNGKAQLAGDWHPGGRPESFAFVDEDEDEDLSRKMELPLTPAPPPPSPPPPPSQFPIAPSNPEEPNGPLPSHKQPPEASDSADQRSSTFQRLLHCLLGKAHSKKKKITQDSTDLVDNMSPEEIEAWEREQLSQPVCFDCCCIDQSPFQLVEQTTLHKTHTLFSLLGLHLAYVTSMGKLRGVLALEELQKAIEGHTKSGVQLRPPLASFRNTTSIRKTPGGPPPPAEGWNVPEDGDGAPGREVMVPTMPETPVPPPSPEAPSCLAPARAEGELEELEMVGSLEPEEELADILHGPSLRSTDEEDEDELIL.

The Cytoplasmic segment spans residues 1 to 118; that stretch reads MERSQSQRHG…VLRRKLGEDW (118 aa). The chain crosses the membrane as a helical span at residues 119–150; that stretch reads IFLVLLGLLMALVSWCMDYVSAKSLQAYKWTY. Residues 151-158 lie on the Extracellular side of the membrane; sequence AQMKPSLP. The helical transmembrane segment at 159–179 threads the bilayer; that stretch reads LQYLAWVTFPLILILFSALFC. Residues 180-183 lie on the Cytoplasmic side of the membrane; that stretch reads QLIS. Positions 184–189 form an intramembrane region, note=Loop between two helices; the sequence is PQAVGS. Residues 188–192 carry the Selectivity filter part_1 motif; sequence GSGIP. A chloride-binding site is contributed by Ser-189. The helical intramembrane region spans 190-195; the sequence is GIPEMK. Over 196–208 the chain is Cytoplasmic; that stretch reads TILRGVVLKEYLT. An intramembrane region (helical) is located at residues 209–224; sequence LKAFVAKVVALTAGLG. The note=Loop between two helices intramembrane region spans 225–230; the sequence is SGIPVG. Positions 230-234 match the Selectivity filter part_2 motif; that stretch reads GKEGP. Residues 231-246 constitute an intramembrane region (helical); the sequence is KEGPFVHIASICAAVL. Over 247 to 268 the chain is Cytoplasmic; that stretch reads SKFMSMFSGVYEQPYYYTDILT. 2 intramembrane regions (helical) span residues 269–280 and 281–290; these read VGCAVGVGCCFG and TPLGGVLFSI. Residues 291–301 are Cytoplasmic-facing; sequence EVTSTYFAVRN. A helical membrane pass occupies residues 302-321; the sequence is YWRGFFAATFSAFVFRVLAV. Residues 322–347 lie on the Extracellular side of the membrane; it reads WNKDAVTITALFRTNFRMDFPFDLKE. A helical transmembrane segment spans residues 348–376; the sequence is LPAFAVIGICCGFLGAVFVYLHRQVMLGV. Residues 377-390 are Cytoplasmic-facing; sequence RKHKCLSQFLAKHR. Residues 391–408 traverse the membrane as a helical segment; that stretch reads LLYPGIVTFVIASLTFPP. Residues 409–414 lie on the Extracellular side of the membrane; sequence GMGQFM. An intramembrane region (note=Loop between two helices) is located at residues 415 to 418; it reads AGEL. The segment at residues 419–426 is an intramembrane region (helical); it reads MPREAIST. The Extracellular segment spans residues 427-457; that stretch reads LFDNNTWVKHIGDPQSLGQSAVWLHPQVNVI. Residues 458–475 constitute an intramembrane region (helical); it reads IIILLFFVMKFWMSIVAT. Positions 476–482 form an intramembrane region, note=Loop between two helices; it reads TMPIPCG. Residues 482–486 carry the Selectivity filter part_3 motif; that stretch reads GGFMP. Positions 483–498 form an intramembrane region, helical; it reads GFMPVFVLGAAFGRLV. Phe-484 contributes to the chloride binding site. At 499 to 521 the chain is on the extracellular side; sequence GEIMAMLFPEGILFDDIIYKILP. Positions 522–538 form an intramembrane region, helical; sequence GGYAVIGAAALTGAVSH. An intramembrane region (note=Loop between two helices) is located at residues 539–540; it reads TV. An intramembrane region (helical) is located at residues 541 to 554; the sequence is STAVICFELTGQIA. Residues 555-557 are Extracellular-facing; that stretch reads HIL. An intramembrane region (helical) is located at residues 558-571; the sequence is PMMVAVILANMVAQ. The segment at residues 572–575 is an intramembrane region (note=Loop between two helices); it reads SLQP. The helical intramembrane region spans 576–578; that stretch reads SLY. Tyr-578 contributes to the chloride binding site. Over 579-994 the chain is Cytoplasmic; that stretch reads DSIIQVKKLP…DEEDEDELIL (416 aa). A CBS 1 domain is found at 609 to 668; the sequence is MVRDVKFVSASCTYGELRNLLQATTVKTLPLVDSKDSMILLGSVERSELQSLLQRHLCAE. The interval 710–770 is disordered; the sequence is EDEDEDLSRK…PEASDSADQR (61 aa). Residues 725-739 show a composition bias toward pro residues; that stretch reads TPAPPPPSPPPPPSQ. One can recognise a CBS 2 domain in the interval 827 to 882; that stretch reads IDQSPFQLVEQTTLHKTHTLFSLLGLHLAYVTSMGKLRGVLALEELQKAIEGHTKS. Disordered stretches follow at residues 886–954 and 971–994; these read LRPP…ARAE and ELAD…ELIL. Phosphoserine is present on Ser-892. The span at 933 to 943 shows a compositional bias: pro residues; the sequence is PETPVPPPSPE. The span at 985 to 994 shows a compositional bias: acidic residues; sequence DEEDEDELIL.

It belongs to the chloride channel (TC 2.A.49) family. ClC-1/CLCN1 subfamily. As to quaternary structure, homodimer. In terms of tissue distribution, predominantly expressed in skeletal muscles.

It localises to the cell membrane. The protein localises to the sarcolemma. It is found in the T-tubule. The enzyme catalyses chloride(in) = chloride(out). It catalyses the reaction thiocyanate(in) = thiocyanate(out). It carries out the reaction bromide(in) = bromide(out). The catalysed reaction is nitrate(in) = nitrate(out). The enzyme catalyses iodide(out) = iodide(in). Modulated by membrane voltage with depolarization favouring channel opening and hyperpolarization favouring channel closure. Inhibited by acidic pH and ATP binding due to a shift of voltage dependence of common gating to more positive voltages. Inhibited by 9-anthracene-carboxylic. Voltage-gated chloride channel involved in skeletal muscle excitability. Generates most of the plasma membrane chloride conductance in skeletal muscle fibers, stabilizes the resting membrane potential and contributes to the repolarization phase during action potential firing. Forms a homodimeric channel where each subunit has its own ion conduction pathway. Conducts double-barreled currents controlled by two types of gates, two fast glutamate gates that control each subunit independently and a slow common gate that opens and shuts off both subunits simultaneously. Has a significant open probability at muscle resting potential and is further activated upon membrane depolarization. Permeable to small monovalent anions with ion selectivity for chloride &gt; thiocyanate &gt; bromide &gt; nitrate &gt; iodide. The chain is Chloride channel protein 1 (Clcn1) from Mus musculus (Mouse).